The chain runs to 511 residues: Maturase K (511 aa).

It belongs to the intron maturase 2 family. MatK subfamily.

The protein resides in the plastid. The protein localises to the chloroplast. Its function is as follows. Usually encoded in the trnK tRNA gene intron. Probably assists in splicing its own and other chloroplast group II introns. The protein is Maturase K of Paulownia tomentosa (Princess tree).